The chain runs to 1295 residues: Phosphoribosylformylglycinamidine synthase (1295 aa).

Residues 305–327 (WPGAATGSGGEIRDEGATGRGAK) form a disordered region. Residues 307 to 318 (GAATGSGGEIRD) and Ala-678 contribute to the ATP site. Glu-718, Asn-722, and Asp-884 together coordinate Mg(2+). Ser-886 is an ATP binding site. Residues 1042-1295 (VAVLREQGVN…IFRNARKQLG (254 aa)) enclose the Glutamine amidotransferase type-1 domain. Cys-1135 serves as the catalytic Nucleophile. Active-site residues include His-1260 and Glu-1262.

In the N-terminal section; belongs to the FGAMS family. In terms of assembly, monomer. Both N-terminus methionine truncation and retention have been observed for this protein.

The protein localises to the cytoplasm. It catalyses the reaction N(2)-formyl-N(1)-(5-phospho-beta-D-ribosyl)glycinamide + L-glutamine + ATP + H2O = 2-formamido-N(1)-(5-O-phospho-beta-D-ribosyl)acetamidine + L-glutamate + ADP + phosphate + H(+). The protein operates within purine metabolism; IMP biosynthesis via de novo pathway; 5-amino-1-(5-phospho-D-ribosyl)imidazole from N(2)-formyl-N(1)-(5-phospho-D-ribosyl)glycinamide: step 1/2. Its function is as follows. Phosphoribosylformylglycinamidine synthase involved in the purines biosynthetic pathway. Catalyzes the ATP-dependent conversion of formylglycinamide ribonucleotide (FGAR) and glutamine to yield formylglycinamidine ribonucleotide (FGAM) and glutamate. In Escherichia coli (strain K12), this protein is Phosphoribosylformylglycinamidine synthase.